We begin with the raw amino-acid sequence, 78 residues long: RNA-binding protein Hfq (78 aa).

Residues 10-69 form the Sm domain; sequence DPFLNALRKEHVPVSIYLVNGIKLQGHIESFDQYVVLLRNTVTQMVYKHAISTVVPARAV.

Belongs to the Hfq family. In terms of assembly, homohexamer.

In terms of biological role, RNA chaperone that binds small regulatory RNA (sRNAs) and mRNAs to facilitate mRNA translational regulation in response to envelope stress, environmental stress and changes in metabolite concentrations. Also binds with high specificity to tRNAs. This is RNA-binding protein Hfq from Janthinobacterium sp. (strain Marseille) (Minibacterium massiliensis).